The sequence spans 199 residues: MFIRTENFQTFIRLYPVVTFILALQAVLWLFFSLPAHSVVLWRDTVTGYNLGVANGEWWRLITPILLHAGFTHLLFNSMSIFLFAPALERMLGKARFLLVYAGSGIIGNIGTYVTEPLDYVHVGASGAIFGLFGVYLFMVLFRNELIGQEHSKMIITLLAFAVLMSFINSNINMMAHLFGLCGGFLLSFLCVQKKERRY.

The next 6 helical transmembrane spans lie at 14–34 (LYPVVTFILALQAVLWLFFSL), 65–85 (ILLHAGFTHLLFNSMSIFLFA), 97–117 (FLLVYAGSGIIGNIGTYVTEP), 122–142 (HVGASGAIFGLFGVYLFMVLF), 147–167 (IGQEHSKMIITLLAFAVLMSF), and 172–192 (INMMAHLFGLCGGFLLSFLCV). The active-site Nucleophile is the Ser126. His177 functions as the Charge relay system in the catalytic mechanism.

Belongs to the peptidase S54 family.

The protein localises to the cell membrane. The sequence is that of Putative rhomboid protease YdcA (ydcA) from Bacillus subtilis (strain 168).